The following is a 159-amino-acid chain: Globin CTT-W (159 aa).

The first 16 residues, 1-16 (MKFLVILTLCIAGAIA), serve as a signal peptide directing secretion. Residues 17–159 (HCDKAPFIKA…HHAIVYSILE (143 aa)) form the Globin domain. Heme b contacts are provided by His-73 and His-108.

It belongs to the globin family.

The polypeptide is Globin CTT-W (CTT-W) (Chironomus thummi piger (Midge)).